The following is a 235-amino-acid chain: MTFDPPLVAATLVRRYKRFLFDAVLEDGSDITGFCANTGSMRGLTTPGSRIYLSQSDRPGRKYRYGFELIEADGTLVGVNTSLPNRLAHEAIRAGLVSDLLHYPQIRTEQRYGENSRIDLLLSGSGKADCYVEVKNVHFIRETGLAEFPDSVTTRGAKHLTEMAKLVAAGKRAAMLYVIQRQDCDALAICADLDPVYGRAFTAAISQGVEAYAVKCAITPRGIIPACGVPVRLTV.

It belongs to the SfsA family.

This Allorhizobium ampelinum (strain ATCC BAA-846 / DSM 112012 / S4) (Agrobacterium vitis (strain S4)) protein is Sugar fermentation stimulation protein homolog.